The sequence spans 607 residues: ATP-dependent RNA helicase dbp9 (607 aa).

The Q motif signature appears at 24–52 (ATFASLGLDARLLQGIAKQNFQSPTLVQS). Positions 55–232 (IPLTLEGRDI…GLFCRNPEVL (178 aa)) constitute a Helicase ATP-binding domain. 68–75 (AKTGSGKT) provides a ligand contact to ATP. The short motif at 180 to 183 (DEAD) is the DEAD box element. The Helicase C-terminal domain maps to 243–475 (GVSQFVVKCA…EVKPYNFDMK (233 aa)). Disordered regions lie at residues 332-380 (VLGD…GKKD) and 580-607 (ARAA…KSRK). Residues 334 to 352 (GDEDEPKPEETEEVEADDA) are compositionally biased toward acidic residues. Positions 353–368 (SGEKEDAKDAKKETKQ) are enriched in basic and acidic residues. The segment covering 580–592 (ARAANKAKGRGKG) has biased composition (basic residues).

Belongs to the DEAD box helicase family. DDX56/DBP9 subfamily.

The protein resides in the nucleus. It localises to the nucleolus. The catalysed reaction is ATP + H2O = ADP + phosphate + H(+). Its function is as follows. ATP-binding RNA helicase involved in the biogenesis of 60S ribosomal subunits and is required for the normal formation of 25S and 5.8S rRNAs. This is ATP-dependent RNA helicase dbp9 (dbp9) from Sclerotinia sclerotiorum (strain ATCC 18683 / 1980 / Ss-1) (White mold).